The primary structure comprises 201 residues: Peroxiredoxin prdx-2 (201 aa).

The Thioredoxin domain occupies 10 to 168; that stretch reads AFIGKPAPQF…TLRLVQAFQF (159 aa). The Cysteine sulfenic acid (-SOH) intermediate role is filled by Cys55.

The protein belongs to the peroxiredoxin family. AhpC/Prx1 subfamily. Monomer and homodimer; disulfide-linked. Under nonstress conditions, present in the reduced monomeric form. Forms active hyperoxidized monomers and disulfide-linked homodimers upon oxidation by hydrogen peroxide. Forms active oxidized homodimers in response to the drug metformin. In terms of processing, the enzyme can be inactivated by further oxidation of the cysteine sulfenic acid (C(P)-SOH) to sulphinic acid (C(P)-SO2H) instead of its condensation to a disulfide bond. As to expression, expressed in the gonad, neurons and intestine (at protein level). Expressed in the pharyngeal inter-neuron I4 and the sensory interneuron I2. Expressed in the intestine, pharyngeal muscle 1, vulval muscle, body wall muscle, epithelial cells e1 and e3, and neurons in the head and tail.

Its subcellular location is the cytoplasm. It carries out the reaction a hydroperoxide + [thioredoxin]-dithiol = an alcohol + [thioredoxin]-disulfide + H2O. Activated following oxidation of the conserved redox-active cysteine residue, which subsequently allows for the oxidation and activation of substrates. Functionally, thiol-specific peroxidase that catalyzes the reduction of hydrogen peroxide and organic hydroperoxides to water and alcohols, respectively. In I2 pharyngeal neurons, required for the inhibition of feeding in response to light and hydrogen peroxide. In the intestine, plays a role in protecting cells against oxidative stress by detoxifying peroxides such as hydrogen peroxide. In addition, plays a role in the recovery from oxidative stress induced by hydrogen peroxide. In its hyperoxidized form (induced by hydrogen peroxide), confers protection against heat stress. However, has a low tendency for overoxidation during the normal lifespan. Increases sensitivity to cytotoxicity caused by metalloids and heavy metals such as arsenic and cadmium by playing a role in inhibiting the expression of phase II detoxification genes such as gcs-1 in intestinal cells. In addition, in response to arsenite, promotes the secretion of the insulin ligand daf-28 into the pseudocoelom, which negatively regulates the activities of daf-16 and skn-1. Plays a role in promoting longevity. Plays a role in the mitohormetic pathway by promoting the activation of pmk-1 in response to the drug metformin. This is Peroxiredoxin prdx-2 from Caenorhabditis elegans.